A 959-amino-acid polypeptide reads, in one-letter code: Translation initiation factor IF-2 (959 aa).

Basic and acidic residues predominate over residues 1–10 (MSDKTNDDKT). Positions 1-374 (MSDKTNDDKT…SQMQETREKI (374 aa)) are disordered. The segment covering 27 to 37 (EQSTVRQNFSH) has biased composition (polar residues). Low complexity-rich tracts occupy residues 63-118 (AAAA…VTKP) and 128-138 (QRPGGQQAQRP). Composition is skewed to basic and acidic residues over residues 154–225 (SEMD…EAAK) and 232–241 (ARSERRDDAR). Low complexity predominate over residues 246 to 284 (GARPQQAGRPQGGRPQPAGRPQQGSPRPAPIIADAAPIA). Residues 318–333 (PEVRAPKVVKGEDDRR) are compositionally biased toward basic and acidic residues. Residues 457–626 (SRPPVVTIMG…LLQAEMLDLK (170 aa)) enclose the tr-type G domain. Residues 466-473 (GHVDHGKT) form a G1 region. 466–473 (GHVDHGKT) serves as a coordination point for GTP. The tract at residues 491–495 (GITQH) is G2. A G3 region spans residues 512-515 (DTPG). GTP-binding positions include 512–516 (DTPGH) and 566–569 (NKID). The G4 stretch occupies residues 566–569 (NKID). Positions 602-604 (SAK) are G5.

It belongs to the TRAFAC class translation factor GTPase superfamily. Classic translation factor GTPase family. IF-2 subfamily.

It localises to the cytoplasm. Its function is as follows. One of the essential components for the initiation of protein synthesis. Protects formylmethionyl-tRNA from spontaneous hydrolysis and promotes its binding to the 30S ribosomal subunits. Also involved in the hydrolysis of GTP during the formation of the 70S ribosomal complex. In Brucella ovis (strain ATCC 25840 / 63/290 / NCTC 10512), this protein is Translation initiation factor IF-2.